Consider the following 93-residue polypeptide: uncharacterized protein (93 aa).

The helical transmembrane segment at 68–88 (WLVTVVLANGVVSLFLLGGLI) threads the bilayer.

It localises to the membrane. This is an uncharacterized protein from Mycoplasma pneumoniae (strain ATCC 29342 / M129 / Subtype 1) (Mycoplasmoides pneumoniae).